A 172-amino-acid chain; its full sequence is Adenine phosphoribosyltransferase (172 aa).

It belongs to the purine/pyrimidine phosphoribosyltransferase family. In terms of assembly, homodimer.

Its subcellular location is the cytoplasm. The catalysed reaction is AMP + diphosphate = 5-phospho-alpha-D-ribose 1-diphosphate + adenine. It functions in the pathway purine metabolism; AMP biosynthesis via salvage pathway; AMP from adenine: step 1/1. Catalyzes a salvage reaction resulting in the formation of AMP, that is energically less costly than de novo synthesis. This Prochlorococcus marinus (strain NATL1A) protein is Adenine phosphoribosyltransferase.